The chain runs to 151 residues: UPF0102 protein Ava_4800 (151 aa).

The protein belongs to the UPF0102 family.

The sequence is that of UPF0102 protein Ava_4800 from Trichormus variabilis (strain ATCC 29413 / PCC 7937) (Anabaena variabilis).